Reading from the N-terminus, the 321-residue chain is Glucokinase (321 aa).

Glycine 8–threonine 13 contributes to the ATP binding site.

This sequence belongs to the bacterial glucokinase family.

It is found in the cytoplasm. The enzyme catalyses D-glucose + ATP = D-glucose 6-phosphate + ADP + H(+). The protein is Glucokinase of Pectobacterium atrosepticum (strain SCRI 1043 / ATCC BAA-672) (Erwinia carotovora subsp. atroseptica).